The sequence spans 268 residues: Proenkephalin-A (268 aa).

Positions 1-24 are cleaved as a signal peptide; that stretch reads MARLLRLCTWLVALGPGLLATVQA. 3 disulfide bridges follow: Cys-26/Cys-48, Cys-30/Cys-52, and Cys-33/Cys-65. The disordered stretch occupies residues 163–184; that stretch reads TGDDRDRENHHQEGGDSDEGVS. Residues 164–176 are compositionally biased toward basic and acidic residues; it reads GDDRDRENHHQEG. 2 consecutive propeptides follow at residues 197–208 and 218–228; these read SPQVEDEAKELQ and VGRPEWWMDYQ. Ser-252 carries the post-translational modification Phosphoserine.

The protein belongs to the opioid neuropeptide precursor family. In terms of processing, proenkephalin-A is cleaved by CTSL to generate Met-enkephalin. Post-translationally, processed and degraded by ACE. Probably cleaved by ACE. In terms of processing, processed by ACE to generate Met-enkephalin in the nucleus accumbens of the brain. Post-translationally, the N-terminal domain contains 6 conserved cysteines thought to be involved in disulfide bonding and/or processing.

The protein resides in the cytoplasmic vesicle. Its subcellular location is the secretory vesicle. It is found in the chromaffin granule lumen. It localises to the secreted. Neuropeptide that competes with and mimic the effects of opiate drugs. They play a role in a number of physiologic functions, including pain perception and responses to stress. Functionally, met-enkephalin-Arg-Phe neuropeptide acts as a strong ligand of Mu-type opioid receptor OPRM1. Met-enkephalin-Arg-Phe-binding to OPRM1 in the nucleus accumbens of the brain increases activation of OPRM1, leading to long-term synaptic depression of glutamate release. Its function is as follows. Increases glutamate release in the striatum and decreases GABA concentration in the striatum. In terms of biological role, increases glutamate release in the striatum. The chain is Proenkephalin-A (PENK) from Cavia porcellus (Guinea pig).